The chain runs to 101 residues: MISIIIAYSTPEKQVEIPLTVEESCTLVVAVKRSGILQQFPEINLSQAIVGIHNKRTALDAGLRDGDRIEIYRPLTMDPKQARLLRAKRGKIRRMVRGEAG.

The protein belongs to the UPF0125 (RnfH) family.

The sequence is that of Protein RnfH from Coxiella burnetii (strain CbuK_Q154) (Coxiella burnetii (strain Q154)).